Here is a 462-residue protein sequence, read N- to C-terminus: Na(+)/H(+) antiporter NhaA 2 (462 aa).

Residues 1–31 are disordered; that stretch reads MKSSTREQTPVTSPTPHDPTPPTPPRGSTPL. The segment covering 16-27 has biased composition (pro residues); sequence PHDPTPPTPPRG. A run of 11 helical transmembrane segments spans residues 52–72, 96–116, 134–154, 165–185, 195–215, 218–238, 244–264, 309–329, 337–357, 382–402, and 408–428; these read IGGALLLLGTVVALVWANSPW, LTLGQWAADGLLAIFFFIAGL, LVPVAAAVGGMAVPAVVYVLV, GWAIPTATDIAFAVAVLAVIS, FLLTLAVVDDLLAITIIAIFY, TLAVLPLLGALAVIAVFGLLV, SWWLLIPLAVVAWALMHASGI, FAVPVFAFFSAGVTVGGLSGL, VALGIVAGLVVGKAAGILGAT, LLGGIGFTVSLLIGELAFGAG, and HVKVGVLTGSLLAAALAAVVL.

The protein belongs to the NhaA Na(+)/H(+) (TC 2.A.33) antiporter family.

The protein localises to the cell membrane. The enzyme catalyses Na(+)(in) + 2 H(+)(out) = Na(+)(out) + 2 H(+)(in). Its function is as follows. Na(+)/H(+) antiporter that extrudes sodium in exchange for external protons. This Kineococcus radiotolerans (strain ATCC BAA-149 / DSM 14245 / SRS30216) protein is Na(+)/H(+) antiporter NhaA 2.